A 344-amino-acid chain; its full sequence is L-erythro-3,5-diaminohexanoate dehydrogenase (344 aa).

The protein belongs to the KDD family. In terms of assembly, homodimer.

It carries out the reaction (3S,5S)-3,5-diaminohexanoate + NAD(+) + H2O = (5S)-5-amino-3-oxohexanoate + NH4(+) + NADH + H(+). The protein operates within amino-acid degradation; L-lysine degradation via acetate pathway. Involved in the anaerobic fermentation of lysine. Catalyzes the oxidative deamination of L-erythro-3,5-diaminohexanoate (3,5-DAH) to 3-keto-5-aminohexanoate (KAH). The polypeptide is L-erythro-3,5-diaminohexanoate dehydrogenase (Acetoanaerobium sticklandii (strain ATCC 12662 / DSM 519 / JCM 1433 / CCUG 9281 / NCIMB 10654 / HF) (Clostridium sticklandii)).